Consider the following 322-residue polypeptide: Deoxyhypusine hydroxylase (322 aa).

HEAT-like PBS-type repeat units lie at residues 76–102 (LKHE…VLAD) and 109–135 (VRHE…YFKE). Histidine 78, glutamate 79, histidine 111, glutamate 112, histidine 236, glutamate 237, histidine 269, and glutamate 270 together coordinate Fe cation. The HEAT-like PBS-type 3 repeat unit spans residues 267-293 (VRHEAAEALGSIATDDVLPVLKEHLKD).

It belongs to the deoxyhypusine hydroxylase family. Fe(2+) serves as cofactor.

It localises to the cytoplasm. It is found in the nucleus. The catalysed reaction is [eIF5A protein]-deoxyhypusine + AH2 + O2 = [eIF5A protein]-hypusine + A + H2O. It functions in the pathway protein modification; eIF5A hypusination. In terms of biological role, catalyzes the hydroxylation of the N(6)-(4-aminobutyl)-L-lysine intermediate to form hypusine, an essential post-translational modification only found in mature eIF-5A factor. The polypeptide is Deoxyhypusine hydroxylase (Kluyveromyces lactis (strain ATCC 8585 / CBS 2359 / DSM 70799 / NBRC 1267 / NRRL Y-1140 / WM37) (Yeast)).